Here is a 315-residue protein sequence, read N- to C-terminus: GTP cyclohydrolase MptA (315 aa).

This sequence belongs to the GTP cyclohydrolase IV family. In terms of assembly, homodimer. Fe(2+) is required as a cofactor.

It carries out the reaction GTP + H2O = 7,8-dihydroneopterin 2',3'-cyclic phosphate + formate + diphosphate + H(+). The protein operates within cofactor biosynthesis; 5,6,7,8-tetrahydromethanopterin biosynthesis. Its function is as follows. Converts GTP to 7,8-dihydro-D-neopterin 2',3'-cyclic phosphate, the first intermediate in the biosynthesis of coenzyme methanopterin. This Methanococcus maripaludis (strain C6 / ATCC BAA-1332) protein is GTP cyclohydrolase MptA.